We begin with the raw amino-acid sequence, 617 residues long: Chaperone protein HscA homolog (617 aa).

A disordered region spans residues 1-23 (MALLQIAEPGQSSAPHEHKRAAG).

The protein belongs to the heat shock protein 70 family.

In terms of biological role, chaperone involved in the maturation of iron-sulfur cluster-containing proteins. Has a low intrinsic ATPase activity which is markedly stimulated by HscB. This is Chaperone protein HscA homolog from Vibrio vulnificus (strain YJ016).